A 164-amino-acid chain; its full sequence is Diphosphoinositol polyphosphate phosphohydrolase 3-alpha (164 aa).

Substrate contacts are provided by residues Arg-9, 17–19 (KKR), and 38–40 (SSR). The Nudix hydrolase domain occupies 17 to 144 (KKRAACLCFR…VHAEYLEKLK (128 aa)). Mg(2+) contacts are provided by Gly-49 and Glu-65. Residues 50 to 71 (GGMEPEEEPGGAAVREVYEEAG) carry the Nudix box motif. Glu-68 functions as the Proton acceptor in the catalytic mechanism. Position 69 (Glu-69) interacts with Mg(2+). Substrate-binding positions include 89–91 (PKH), Arg-115, and Lys-133. Positions 144-164 (KLGGSPTNGNSMAPSSPDSDP) are disordered. The segment covering 148–164 (SPTNGNSMAPSSPDSDP) has biased composition (polar residues).

It belongs to the Nudix hydrolase family. DIPP subfamily. It depends on Mg(2+) as a cofactor. The cofactor is Mn(2+). Mainly expressed in testis and, at lower level in brain. According to PubMed:12121577, it is widely expressed.

It is found in the cytoplasm. It catalyses the reaction diphospho-myo-inositol polyphosphate + H2O = myo-inositol polyphosphate + phosphate.. The enzyme catalyses P(1),P(6)-bis(5'-adenosyl) hexaphosphate + H2O = adenosine 5'-pentaphosphate + AMP + 2 H(+). The catalysed reaction is P(1),P(5)-bis(5'-adenosyl) pentaphosphate + H2O = adenosine 5'-tetraphosphate + AMP + 2 H(+). Its function is as follows. Cleaves a beta-phosphate from the diphosphate groups in PP-InsP5 (diphosphoinositol pentakisphosphate), suggesting that it may play a role in signal transduction. Also able to catalyze the hydrolysis of dinucleoside oligophosphates, with Ap6A and Ap5A being the preferred substrates. The major reaction products are ADP and p4a from Ap6A and ADP and ATP from Ap5A. Also able to hydrolyze 5-phosphoribose 1-diphosphate. The polypeptide is Diphosphoinositol polyphosphate phosphohydrolase 3-alpha (NUDT10) (Homo sapiens (Human)).